A 208-amino-acid chain; its full sequence is Imidazole glycerol phosphate synthase subunit HisH (208 aa).

Positions 1-206 constitute a Glutamine amidotransferase type-1 domain; sequence MIVIIDYDTG…KEVTESCKSS (206 aa). Cys-79 functions as the Nucleophile in the catalytic mechanism. Catalysis depends on residues His-181 and Glu-183.

Heterodimer of HisH and HisF.

Its subcellular location is the cytoplasm. It catalyses the reaction 5-[(5-phospho-1-deoxy-D-ribulos-1-ylimino)methylamino]-1-(5-phospho-beta-D-ribosyl)imidazole-4-carboxamide + L-glutamine = D-erythro-1-(imidazol-4-yl)glycerol 3-phosphate + 5-amino-1-(5-phospho-beta-D-ribosyl)imidazole-4-carboxamide + L-glutamate + H(+). The enzyme catalyses L-glutamine + H2O = L-glutamate + NH4(+). It participates in amino-acid biosynthesis; L-histidine biosynthesis; L-histidine from 5-phospho-alpha-D-ribose 1-diphosphate: step 5/9. Functionally, IGPS catalyzes the conversion of PRFAR and glutamine to IGP, AICAR and glutamate. The HisH subunit catalyzes the hydrolysis of glutamine to glutamate and ammonia as part of the synthesis of IGP and AICAR. The resulting ammonia molecule is channeled to the active site of HisF. The sequence is that of Imidazole glycerol phosphate synthase subunit HisH from Listeria innocua serovar 6a (strain ATCC BAA-680 / CLIP 11262).